Reading from the N-terminus, the 113-residue chain is Class I hydrophobin POH3 (113 aa).

The signal sequence occupies residues 1 to 21 (MFSRVIFCTFLILPLLAAATA). Intrachain disulfides connect Cys-32–Cys-92, Cys-39–Cys-86, Cys-40–Cys-73, and Cys-93–Cys-106. A glycan (N-linked (GlcNAc...) asparagine) is linked at Asn-110.

It belongs to the fungal hydrophobin family. Self-assembles to form functional amyloid fibrils called rodlets. Self-assembly into fibrillar rodlets occurs spontaneously at hydrophobic:hydrophilic interfaces and the rodlets further associate laterally to form amphipathic monolayers. In terms of tissue distribution, expressionn is switched off in the fruiting bodies but abundantly expressed in the vegetative mycelium of both monokaryon and dikaryon.

The protein localises to the secreted. The protein resides in the cell wall. Functionally, aerial growth, conidiation, and dispersal of filamentous fungi in the environment rely upon a capability of their secreting small amphipathic proteins called hydrophobins (HPBs) with low sequence identity. Class I can self-assemble into an outermost layer of rodlet bundles on aerial cell surfaces, conferring cellular hydrophobicity that supports fungal growth, development and dispersal; whereas Class II form highly ordered films at water-air interfaces through intermolecular interactions but contribute nothing to the rodlet structure. POH3 is a class I hydrophobin that causes a large drop in the water-surface tension, enabling hyphae to breach the interface and grow into the air, in both the primary and the secondary mycelium. In the latter mycelium POH3 maight also play a role in the emergence of fruiting bodies. Secreted POH3 could also play a role in facilitating lignin degradation. The protein is Class I hydrophobin POH3 of Pleurotus ostreatus (Oyster mushroom).